A 381-amino-acid polypeptide reads, in one-letter code: Terpene cyclase ATR13 (381 aa).

The protein belongs to the terpene synthase family.

The protein operates within mycotoxin biosynthesis. In terms of biological role, terpene cyclase; part of the core atranone cluster (CAC) which products are predicted to catalyze most or all steps of mycotoxin atranone synthesis, starting from geranylgeranyl pyrophosphate (GGPP). The initial cyclization of GGPP to dolabellane is probably performed by the terpene cyclase ATR13. The Baeyer-Villiger oxidation near the end of the atranone synthesis, which converts atranones D and E to atranones F and G is predicted to be catalyzed by the monooxygenase ATR8. Of the CAC's other predicted gene products, the reducing PKS ATR6 might synthesize a polyketide chain. This polyketide is probably transferred onto the atranone backbone by the polyketide transferase ATR5. Other predicted CAC products include 4 oxygenases (ATR2, ATR3, ATR4, and ATR14), 3 short-chain reductases (ATR7, ATR9, and ATR10), and a methyltransferase (ATR12). These may all be involved in the various steps of atranone biosynthesis, although their specific roles must await experimental determination. The chain is Terpene cyclase ATR13 from Stachybotrys chlorohalonatus (strain IBT 40285).